The chain runs to 103 residues: Large ribosomal subunit protein bL21 (103 aa).

The protein belongs to the bacterial ribosomal protein bL21 family. As to quaternary structure, part of the 50S ribosomal subunit. Contacts protein L20.

Its function is as follows. This protein binds to 23S rRNA in the presence of protein L20. This chain is Large ribosomal subunit protein bL21, found in Salmonella agona (strain SL483).